A 38-amino-acid polypeptide reads, in one-letter code: Photosystem II reaction center protein L (38 aa).

A helical membrane pass occupies residues 17–37 (SLYWGLLLIFVLAVLFSNYFF).

This sequence belongs to the PsbL family. As to quaternary structure, PSII is composed of 1 copy each of membrane proteins PsbA, PsbB, PsbC, PsbD, PsbE, PsbF, PsbH, PsbI, PsbJ, PsbK, PsbL, PsbM, PsbT, PsbX, PsbY, PsbZ, Psb30/Ycf12, at least 3 peripheral proteins of the oxygen-evolving complex and a large number of cofactors. It forms dimeric complexes.

The protein resides in the plastid. It localises to the chloroplast thylakoid membrane. Functionally, one of the components of the core complex of photosystem II (PSII). PSII is a light-driven water:plastoquinone oxidoreductase that uses light energy to abstract electrons from H(2)O, generating O(2) and a proton gradient subsequently used for ATP formation. It consists of a core antenna complex that captures photons, and an electron transfer chain that converts photonic excitation into a charge separation. This subunit is found at the monomer-monomer interface and is required for correct PSII assembly and/or dimerization. The protein is Photosystem II reaction center protein L of Adiantum capillus-veneris (Maidenhair fern).